The sequence spans 159 residues: 6,7-dimethyl-8-ribityllumazine synthase (159 aa).

5-amino-6-(D-ribitylamino)uracil is bound by residues F23, 61–63, and 85–87; these read SFE and AVI. 90–91 is a binding site for (2S)-2-hydroxy-3-oxobutyl phosphate; it reads DT. Catalysis depends on H93, which acts as the Proton donor. F118 is a 5-amino-6-(D-ribitylamino)uracil binding site. Position 132 (R132) interacts with (2S)-2-hydroxy-3-oxobutyl phosphate.

It belongs to the DMRL synthase family.

It carries out the reaction (2S)-2-hydroxy-3-oxobutyl phosphate + 5-amino-6-(D-ribitylamino)uracil = 6,7-dimethyl-8-(1-D-ribityl)lumazine + phosphate + 2 H2O + H(+). The protein operates within cofactor biosynthesis; riboflavin biosynthesis; riboflavin from 2-hydroxy-3-oxobutyl phosphate and 5-amino-6-(D-ribitylamino)uracil: step 1/2. Its function is as follows. Catalyzes the formation of 6,7-dimethyl-8-ribityllumazine by condensation of 5-amino-6-(D-ribitylamino)uracil with 3,4-dihydroxy-2-butanone 4-phosphate. This is the penultimate step in the biosynthesis of riboflavin. This Synechococcus sp. (strain RCC307) protein is 6,7-dimethyl-8-ribityllumazine synthase.